Consider the following 785-residue polypeptide: Terminal nucleotidyltransferase 4A (785 aa).

Residues 56–184 are disordered; that stretch reads AAGRAAPAAG…QFHPGRRKRE (129 aa). Residues 68–85 show a composition bias toward pro residues; sequence GPAPAASSPPPAPGPAAL. 2 stretches are compositionally biased toward low complexity: residues 86-98 and 106-145; these read PPAL…PAAD and SPSL…AGSG. Residues D290 and D292 each coordinate Mg(2+). G353, K378, S396, and Y397 together coordinate ATP. In terms of domain architecture, PAP-associated spans 421-480; the sequence is NLGMLLVEFFELYGRNFNYLKTGIRIKEGGAYIAKEEIMKAMTSGYRPSMLCIEDPLLPG. Residues N481 and R485 each contribute to the ATP site. Residues 593-611 are compositionally biased toward low complexity; the sequence is PQLLSSGSSASSVSSLSGS. 2 disordered regions span residues 593-625 and 731-785; these read PQLL…TPSV and KGSH…SLSR. Over residues 757–774 the composition is skewed to basic residues; sequence RGHHQYNRTGWRRKKHAH.

The protein belongs to the DNA polymerase type-B-like family. As to quaternary structure, component of a nuclear TRAMP-like complex, an ATP-dependent exosome regulatory complex consisting of a helicase (MTREX), an oligadenylate polymerase (TENT4B or TENT4A), and a substrate specific RNA-binding factor (ZCCHC7 or ZCCHC8). Several TRAMP-like complexes exist with specific compositions and are associated with nuclear, or nucleolar RNA exosomes. It depends on Mg(2+) as a cofactor. Mn(2+) serves as cofactor.

It localises to the cytoplasm. It is found in the nucleus. The protein localises to the nucleoplasm. The catalysed reaction is RNA(n) + ATP = RNA(n)-3'-adenine ribonucleotide + diphosphate. Functionally, terminal nucleotidyltransferase that catalyzes preferentially the transfer of ATP and GTP on RNA 3' poly(A) tail creating a heterogeneous 3' poly(A) tail leading to mRNAs stabilization by protecting mRNAs from active deadenylation. Also functions as a catalytic subunit of a TRAMP-like complex which has a poly(A) RNA polymerase activity and is involved in a post-transcriptional quality control mechanism. Polyadenylation with short oligo(A) tails is required for the degradative activity of the exosome on several of its nuclear RNA substrates. Has no terminal uridylyltransferase activity, and does not play a role in replication-dependent histone mRNA degradation via uridylation. In Mus musculus (Mouse), this protein is Terminal nucleotidyltransferase 4A.